Consider the following 176-residue polypeptide: Shikimate kinase (176 aa).

14-19 lines the ATP pocket; that stretch reads GAGKST. Ser-18 contacts Mg(2+). Substrate-binding residues include Asp-36, Arg-60, and Gly-83. Residue Arg-121 coordinates ATP. A substrate-binding site is contributed by Arg-140.

This sequence belongs to the shikimate kinase family. In terms of assembly, monomer. It depends on Mg(2+) as a cofactor.

It is found in the cytoplasm. It catalyses the reaction shikimate + ATP = 3-phosphoshikimate + ADP + H(+). It functions in the pathway metabolic intermediate biosynthesis; chorismate biosynthesis; chorismate from D-erythrose 4-phosphate and phosphoenolpyruvate: step 5/7. Functionally, catalyzes the specific phosphorylation of the 3-hydroxyl group of shikimic acid using ATP as a cosubstrate. This chain is Shikimate kinase, found in Francisella tularensis subsp. holarctica (strain FTNF002-00 / FTA).